Here is a 645-residue protein sequence, read N- to C-terminus: Protein FAM47B (645 aa).

Composition is skewed to basic and acidic residues over residues 1–11, 238–251, and 288–299; these read MGDRRPQDRPR, EPPETRASHLRVDP, and PETRVSHLHPEP. Disordered stretches follow at residues 1–23 and 168–321; these read MGDRRPQDRPRSQGMDSKPWYCD and AREK…SLCP.

Belongs to the FAM47 family.

This is Protein FAM47B (FAM47B) from Homo sapiens (Human).